The following is a 457-amino-acid chain: tRNA modification GTPase MnmE (457 aa).

(6S)-5-formyl-5,6,7,8-tetrahydrofolate-binding residues include arginine 22, glutamate 83, and arginine 122. Positions 219 to 378 constitute a TrmE-type G domain; the sequence is GLATAIIGRP…LEEAIKALFF (160 aa). Asparagine 229 contributes to the K(+) binding site. Residues 229 to 234, 248 to 254, and 273 to 276 contribute to the GTP site; these read NVGKSS, TDIAGTT, and DTAG. Serine 233 provides a ligand contact to Mg(2+). 3 residues coordinate K(+): threonine 248, isoleucine 250, and threonine 253. Threonine 254 is a binding site for Mg(2+). Lysine 457 is a binding site for (6S)-5-formyl-5,6,7,8-tetrahydrofolate.

It belongs to the TRAFAC class TrmE-Era-EngA-EngB-Septin-like GTPase superfamily. TrmE GTPase family. As to quaternary structure, homodimer. Heterotetramer of two MnmE and two MnmG subunits. K(+) is required as a cofactor.

Its subcellular location is the cytoplasm. Functionally, exhibits a very high intrinsic GTPase hydrolysis rate. Involved in the addition of a carboxymethylaminomethyl (cmnm) group at the wobble position (U34) of certain tRNAs, forming tRNA-cmnm(5)s(2)U34. This Listeria innocua serovar 6a (strain ATCC BAA-680 / CLIP 11262) protein is tRNA modification GTPase MnmE.